We begin with the raw amino-acid sequence, 38 residues long: Esterase-5 (38 aa).

Positions 1–38 are disordered; the sequence is SAAADPLIVELPNGKVRGRDNEGYYEAEGIPRAEPPVG.

Belongs to the type-B carboxylesterase/lipase family.

It carries out the reaction a carboxylic ester + H2O = an alcohol + a carboxylate + H(+). This is Esterase-5 (Est-5) from Drosophila mojavensis (Fruit fly).